Consider the following 417-residue polypeptide: NADH-quinone oxidoreductase subunit D (417 aa).

This sequence belongs to the complex I 49 kDa subunit family. As to quaternary structure, NDH-1 is composed of 14 different subunits. Subunits NuoB, C, D, E, F, and G constitute the peripheral sector of the complex.

It is found in the cell inner membrane. It carries out the reaction a quinone + NADH + 5 H(+)(in) = a quinol + NAD(+) + 4 H(+)(out). Its function is as follows. NDH-1 shuttles electrons from NADH, via FMN and iron-sulfur (Fe-S) centers, to quinones in the respiratory chain. The immediate electron acceptor for the enzyme in this species is believed to be ubiquinone. Couples the redox reaction to proton translocation (for every two electrons transferred, four hydrogen ions are translocated across the cytoplasmic membrane), and thus conserves the redox energy in a proton gradient. This is NADH-quinone oxidoreductase subunit D from Legionella pneumophila (strain Corby).